Reading from the N-terminus, the 93-residue chain is Parbolysin P4 (93 aa).

3 disulfides stabilise this stretch: Cys-16–Cys-37, Cys-22–Cys-33, and Cys-47–Cys-60.

It belongs to the worm cytolysin family. As to expression, localized within the skin and proboscis and are most readily isolated from body mucus secretions.

It is found in the secreted. In terms of biological role, cytolysin that shows hemolytic activity (on bovine erythrocytes, HC(50)=5.75 mg/ml). This hemolytic activity is completely inhibited by small unilamelar vesicles composed of PC/PG, PC/PI and PC/PS in 1:1 molar ratios (with at least 100 mg/ml concentration). This Parborlasia corrugatus (Antarctic nemertean worm) protein is Parbolysin P4.